Consider the following 466-residue polypeptide: MTIRLHDTNARQIRDFVPLTAGCVSIYLCGATVQAAPHIGHIRSGLNFDIMRRWFAYRGYDVTFIRNVTDIDDKIIAKSAEQGRPWWSIGYENERAFNDGYDALGCLPPTYEPRATGHIPEMIEMMRGLIERGHAYEADGNVYFDVRSLPGYLTLSNQELDDLRQPSGEGETGKRDQRDFAMWKATKPGEPSWETPWGRGRPGWHLECSAMAHKYLGSAFDIHGGGIDLIFPHHENEIAQATAYGDEFAKYWVHNGWVTMSGEKMSKSLGNSVLVSEMVKHWRPIVLRYYLGTPHYRSMIEYSEEALREAESAFARIEGFVQRVTEKTGEVVPPADEVPPAFAEAMDEDLGVPQALAIIHTTVRQGNSALAADDKEAAADRLAEVRAMLGVLGLDPLDPHWAGEGDRGEDLHGVVDTLVRLVLDQRQSARARKDWAAADAIRDQLNQSGLVIEDSPAGPRWTLGPR.

Cys-29 lines the Zn(2+) pocket. The 'HIGH' region signature appears at 31–41 (ATVQAAPHIGH). Zn(2+) is bound by residues Cys-208, His-233, and Glu-237. The 'KMSKS' region motif lies at 264 to 268 (KMSKS). Lys-267 contacts ATP.

It belongs to the class-I aminoacyl-tRNA synthetase family. Monomer. Zn(2+) is required as a cofactor.

It is found in the cytoplasm. It catalyses the reaction tRNA(Cys) + L-cysteine + ATP = L-cysteinyl-tRNA(Cys) + AMP + diphosphate. This Streptomyces griseus subsp. griseus (strain JCM 4626 / CBS 651.72 / NBRC 13350 / KCC S-0626 / ISP 5235) protein is Cysteine--tRNA ligase.